A 144-amino-acid polypeptide reads, in one-letter code: uncharacterized protein (144 aa).

The interval 90–144 is disordered; sequence KKEYSALKKSGKIHKVGGSKSSGHRKTKKPKKSMKGGSKTKKLSEKQLMKELLAM. Residues 98–130 show a composition bias toward basic residues; it reads KSGKIHKVGGSKSSGHRKTKKPKKSMKGGSKTK.

This is an uncharacterized protein from Sputnik virophage.